The following is a 244-amino-acid chain: Ribonuclease 3 (244 aa).

Positions 5–136 (LAELERAIGI…LVGAIYLDQG (132 aa)) constitute an RNase III domain. Glutamate 49 contributes to the Mg(2+) binding site. Residue aspartate 53 is part of the active site. Aspartate 122 and glutamate 125 together coordinate Mg(2+). Glutamate 125 is an active-site residue. In terms of domain architecture, DRBM spans 161-229 (DPTTRLQELM…ARKALAAWDK (69 aa)).

Belongs to the ribonuclease III family. Homodimer. The cofactor is Mg(2+).

Its subcellular location is the cytoplasm. It catalyses the reaction Endonucleolytic cleavage to 5'-phosphomonoester.. Its function is as follows. Digests double-stranded RNA. Involved in the processing of primary rRNA transcript to yield the immediate precursors to the large and small rRNAs (23S and 16S). Processes some mRNAs, and tRNAs when they are encoded in the rRNA operon. Processes pre-crRNA and tracrRNA of type II CRISPR loci if present in the organism. In Chloroflexus aurantiacus (strain ATCC 29364 / DSM 637 / Y-400-fl), this protein is Ribonuclease 3.